Here is an 89-residue protein sequence, read N- to C-terminus: Large ribosomal subunit protein bL27 (89 aa).

Residues 1 to 22 (MAHKKAGGSSRNGRDSESKRLG) form a disordered region.

The protein belongs to the bacterial ribosomal protein bL27 family.

In Bartonella tribocorum (strain CIP 105476 / IBS 506), this protein is Large ribosomal subunit protein bL27.